Reading from the N-terminus, the 427-residue chain is Glutamate-1-semialdehyde 2,1-aminomutase (427 aa).

At Lys265 the chain carries N6-(pyridoxal phosphate)lysine.

It belongs to the class-III pyridoxal-phosphate-dependent aminotransferase family. HemL subfamily. In terms of assembly, homodimer. Pyridoxal 5'-phosphate serves as cofactor.

Its subcellular location is the cytoplasm. The enzyme catalyses (S)-4-amino-5-oxopentanoate = 5-aminolevulinate. Its pathway is porphyrin-containing compound metabolism; protoporphyrin-IX biosynthesis; 5-aminolevulinate from L-glutamyl-tRNA(Glu): step 2/2. This Burkholderia vietnamiensis (strain G4 / LMG 22486) (Burkholderia cepacia (strain R1808)) protein is Glutamate-1-semialdehyde 2,1-aminomutase.